The following is a 619-amino-acid chain: Cationic amino acid transporter 3 (619 aa).

The Cytoplasmic segment spans residues 1–36 (MPWQAFRRFGQKLVRRRTLESGMAETRLARCLSTLD). The helical transmembrane segment at 37-57 (LVALGVGSTLGAGVYVLAGEV) threads the bilayer. Topologically, residues 58–61 (AKDK) are extracellular. The helical transmembrane segment at 62-82 (AGPSIVICFLVAALSSVLAGL) threads the bilayer. Over 83-107 (CYAEFGARVPRSGSAYLYSYVTVGE) the chain is Cytoplasmic. Residues 108–128 (LWAFTTGWNLILSYVIGTASV) traverse the membrane as a helical segment. Residues 129-162 (ARAWSSAFDNLIGNHISKTLQGSIALHVPHVLAE) lie on the Extracellular side of the membrane. Residues 163–183 (YPDFFALGLVLLLTGLLALGA) traverse the membrane as a helical segment. Over 184 to 191 (SESALVTK) the chain is Cytoplasmic. A helical membrane pass occupies residues 192 to 212 (VFTGVNLLVLGFVMISGFVKG). The Extracellular portion of the chain corresponds to 213–233 (DVHNWKLTEEDYELAMAELND). N-linked (GlcNAc...) asparagine glycosylation occurs at N232. A helical membrane pass occupies residues 234–254 (TYSLGPLGSGGFVPFGFEGIL). The Cytoplasmic segment spans residues 255–285 (RGAATCFYAFVGFDCIATTGEEAQNPQRSIP). A helical transmembrane segment spans residues 286 to 306 (MGIVISLSVCFLAYFAVSSAL). Residues 307–335 (TLMMPYYQLQPESPLPEAFLYIGWAPARY) are Extracellular-facing. The helical transmembrane segment at 336–356 (VVAVGSLCALSTSLLGSMFPM) threads the bilayer. At 357–382 (PRVIYAMAEDGLLFRVLARIHTGTRT) the chain is on the cytoplasmic side. Residues 383–403 (PIIATVVSGIIAAFMAFLFKL) form a helical membrane-spanning segment. Over 404 to 406 (TDL) the chain is Extracellular. Residues 407 to 427 (VDLMSIGTLLAYSLVSICVLI) traverse the membrane as a helical segment. The Cytoplasmic portion of the chain corresponds to 428–475 (LRYQPDQETKTGEEVELQEEAITTESEKLTLWGLFFPLNSIPTPLSGQ). Residues 476–496 (IVYVCSSLLAVLLTALCLVLA) traverse the membrane as a helical segment. Residues 497–506 (QWSVPLLSGD) lie on the Extracellular side of the membrane. Residues 507–527 (LLWTAVVVLLLLLIIGIIVVI) traverse the membrane as a helical segment. Over 528-540 (WRQPQSSTPLHFK) the chain is Cytoplasmic. A helical membrane pass occupies residues 541-561 (VPALPLLPLMSIFVNIYLMMQ). Residues 562–569 (MTAGTWAR) lie on the Extracellular side of the membrane. The chain crosses the membrane as a helical span at residues 570 to 590 (FGVWMLIGFAIYFGYGIQHSL). The Cytoplasmic segment spans residues 591-619 (EEIKSNQPSRKSRAKTVDLDPGTLYVHSV). Residue T606 is modified to Phosphothreonine. A Phosphoserine modification is found at S618.

This sequence belongs to the amino acid-polyamine-organocation (APC) superfamily. Cationic amino acid transporter (CAT) (TC 2.A.3.3) family. In terms of processing, N-glycosylated. As to expression, highly expressed in thymus, uterus and testis. Detected at lower levels in brain, mammary gland, prostate, salivary gland and fetal spleen. In brain, highest expression in thalamus, hippocampus and amygdala.

It localises to the cell membrane. It carries out the reaction L-arginine(in) = L-arginine(out). The enzyme catalyses L-lysine(in) = L-lysine(out). The catalysed reaction is L-ornithine(in) = L-ornithine(out). Functionally, uniporter that mediates the uptake of cationic L-amino acids such as L-arginine, L-lysine and L-ornithine. The transport is sodium ions- and pH-independent, moderately trans-stimulated and is mediated by passive diffusion. This Homo sapiens (Human) protein is Cationic amino acid transporter 3.